A 120-amino-acid polypeptide reads, in one-letter code: Large ribosomal subunit protein uL18 (120 aa).

The interval 1–24 (MITKAAKNATRKKRHARVRAKLTG) is disordered. The segment covering 9 to 20 (ATRKKRHARVRA) has biased composition (basic residues).

It belongs to the universal ribosomal protein uL18 family. Part of the 50S ribosomal subunit; part of the 5S rRNA/L5/L18/L25 subcomplex. Contacts the 5S and 23S rRNAs.

In terms of biological role, this is one of the proteins that bind and probably mediate the attachment of the 5S RNA into the large ribosomal subunit, where it forms part of the central protuberance. The polypeptide is Large ribosomal subunit protein uL18 (Bacillus mycoides (strain KBAB4) (Bacillus weihenstephanensis)).